The following is a 304-amino-acid chain: Aspartate carbamoyltransferase catalytic subunit (304 aa).

Carbamoyl phosphate contacts are provided by Arg49 and Thr50. An L-aspartate-binding site is contributed by Lys77. Positions 99, 127, and 130 each coordinate carbamoyl phosphate. Positions 160 and 211 each coordinate L-aspartate. Ala252 and Pro253 together coordinate carbamoyl phosphate.

This sequence belongs to the aspartate/ornithine carbamoyltransferase superfamily. ATCase family. In terms of assembly, heterododecamer (2C3:3R2) of six catalytic PyrB chains organized as two trimers (C3), and six regulatory PyrI chains organized as three dimers (R2).

It carries out the reaction carbamoyl phosphate + L-aspartate = N-carbamoyl-L-aspartate + phosphate + H(+). It participates in pyrimidine metabolism; UMP biosynthesis via de novo pathway; (S)-dihydroorotate from bicarbonate: step 2/3. In terms of biological role, catalyzes the condensation of carbamoyl phosphate and aspartate to form carbamoyl aspartate and inorganic phosphate, the committed step in the de novo pyrimidine nucleotide biosynthesis pathway. In Bacillus cereus (strain ZK / E33L), this protein is Aspartate carbamoyltransferase catalytic subunit.